Reading from the N-terminus, the 458-residue chain is Alpha-2C adrenergic receptor (458 aa).

Residues 1-51 (MASPALAAALAAAAAEGPNGSDAGEWGSGGGANASGTDWVPPPGQYSAGAV) lie on the Extracellular side of the membrane. N-linked (GlcNAc...) asparagine glycans are attached at residues Asn19 and Asn33. The chain crosses the membrane as a helical span at residues 52–76 (AGLAAVVGFLIVFTVVGNVLVVIAV). The Cytoplasmic segment spans residues 77 to 88 (LTSRALRAPQNL). A helical membrane pass occupies residues 89–114 (FLVSLASADILVATLVMPFSLANELM). Residues 115–124 (AYWYFGQVWC) are Extracellular-facing. Cys124 and Cys202 are joined by a disulfide. A helical transmembrane segment spans residues 125–147 (GVYLALDVLFCTSSIVHLCAISL). Residues 148–168 (DRYWSVTQAVEYNLKRTPRRV) are Cytoplasmic-facing. A helical transmembrane segment spans residues 169–191 (KATIVAVWLISAVISFPPLVSFY). The Extracellular portion of the chain corresponds to 192–207 (RRPDGAAYPQCGLNDE). A helical membrane pass occupies residues 208 to 231 (TWYILSSCIGSFFAPCLIMGLVYA). Over 232 to 379 (RIYRVAKLRT…QAREKRFTFV (148 aa)) the chain is Cytoplasmic. Positions 245-343 (SEKRGPAGPD…SPGPGGRLSR (99 aa)) are disordered. Over residues 291–303 (RRRRRGALRRGGR) the composition is skewed to basic residues. Residues 380-403 (LAVVMGVFVLCWFPFFFSYSLYGI) traverse the membrane as a helical segment. The Extracellular portion of the chain corresponds to 404–416 (CREACQLPEPLFK). Residues 417-437 (FFFWIGYCNSSLNPVIYTVFN) form a helical membrane-spanning segment. Topologically, residues 438–458 (QDFRRSFKHILFRRRRRGFRQ) are cytoplasmic.

It belongs to the G-protein coupled receptor 1 family. Adrenergic receptor subfamily. ADRA2C sub-subfamily.

It is found in the cell membrane. Alpha-2 adrenergic receptors mediate the catecholamine-induced inhibition of adenylate cyclase through the action of G proteins. This is Alpha-2C adrenergic receptor (Adra2c) from Mus musculus (Mouse).